The chain runs to 322 residues: Formimidoylglutamase (322 aa).

Mn(2+)-binding residues include H130, D156, H158, D160, C244, and D246.

This sequence belongs to the arginase family. Mn(2+) serves as cofactor.

It catalyses the reaction N-formimidoyl-L-glutamate + H2O = formamide + L-glutamate. Its pathway is amino-acid degradation; L-histidine degradation into L-glutamate; L-glutamate from N-formimidoyl-L-glutamate (hydrolase route): step 1/1. Its function is as follows. Catalyzes the conversion of N-formimidoyl-L-glutamate to L-glutamate and formamide. The protein is Formimidoylglutamase of Geobacillus thermodenitrificans (strain NG80-2).